Reading from the N-terminus, the 330-residue chain is 4-hydroxythreonine-4-phosphate dehydrogenase (330 aa).

Residues His-134 and Thr-135 each contribute to the substrate site. 3 residues coordinate a divalent metal cation: His-163, His-208, and His-263. Substrate is bound by residues Lys-271, Asn-280, and Arg-289.

The protein belongs to the PdxA family. In terms of assembly, homodimer. Requires Zn(2+) as cofactor. Mg(2+) serves as cofactor. The cofactor is Co(2+).

The protein localises to the cytoplasm. It catalyses the reaction 4-(phosphooxy)-L-threonine + NAD(+) = 3-amino-2-oxopropyl phosphate + CO2 + NADH. Its pathway is cofactor biosynthesis; pyridoxine 5'-phosphate biosynthesis; pyridoxine 5'-phosphate from D-erythrose 4-phosphate: step 4/5. In terms of biological role, catalyzes the NAD(P)-dependent oxidation of 4-(phosphooxy)-L-threonine (HTP) into 2-amino-3-oxo-4-(phosphooxy)butyric acid which spontaneously decarboxylates to form 3-amino-2-oxopropyl phosphate (AHAP). The sequence is that of 4-hydroxythreonine-4-phosphate dehydrogenase from Methylococcus capsulatus (strain ATCC 33009 / NCIMB 11132 / Bath).